The sequence spans 311 residues: tRNA-cytidine(32) 2-sulfurtransferase (311 aa).

The PP-loop motif signature appears at 47-52; it reads SGGKDS. [4Fe-4S] cluster-binding residues include Cys122, Cys125, and Cys213.

It belongs to the TtcA family. Homodimer. It depends on Mg(2+) as a cofactor. Requires [4Fe-4S] cluster as cofactor.

The protein resides in the cytoplasm. It catalyses the reaction cytidine(32) in tRNA + S-sulfanyl-L-cysteinyl-[cysteine desulfurase] + AH2 + ATP = 2-thiocytidine(32) in tRNA + L-cysteinyl-[cysteine desulfurase] + A + AMP + diphosphate + H(+). The protein operates within tRNA modification. In terms of biological role, catalyzes the ATP-dependent 2-thiolation of cytidine in position 32 of tRNA, to form 2-thiocytidine (s(2)C32). The sulfur atoms are provided by the cysteine/cysteine desulfurase (IscS) system. The protein is tRNA-cytidine(32) 2-sulfurtransferase of Escherichia coli (strain K12 / MC4100 / BW2952).